A 141-amino-acid polypeptide reads, in one-letter code: Hemoglobin subunit alpha-A (141 aa).

In terms of domain architecture, Globin spans Val-1 to Arg-141. His-58 contributes to the O2 binding site. His-87 serves as a coordination point for heme b.

It belongs to the globin family. Heterotetramer of two alpha chains and two beta chains. In terms of tissue distribution, red blood cells.

In terms of biological role, involved in oxygen transport from the lung to the various peripheral tissues. This Chroicocephalus ridibundus (Black-headed gull) protein is Hemoglobin subunit alpha-A (HBAA).